Consider the following 122-residue polypeptide: Photosystem II extrinsic protein U (122 aa).

An N-terminal signal peptide occupies residues methionine 1–alanine 30.

The protein belongs to the PsbU family. As to quaternary structure, PSII is composed of 1 copy each of membrane proteins PsbA, PsbB, PsbC, PsbD, PsbE, PsbF, PsbH, PsbI, PsbJ, PsbK, PsbL, PsbM, PsbT, PsbX, PsbY, PsbZ, Psb30/Ycf12, peripheral proteins PsbO, CyanoQ (PsbQ), PsbU, PsbV and a large number of cofactors. It forms dimeric complexes.

Its subcellular location is the cellular thylakoid membrane. In terms of biological role, one of the extrinsic, lumenal subunits of photosystem II (PSII). PSII is a light-driven water plastoquinone oxidoreductase, using light energy to abstract electrons from H(2)O, generating a proton gradient subsequently used for ATP formation. The extrinsic proteins stabilize the structure of photosystem II oxygen-evolving complex (OEC), the ion environment of oxygen evolution and protect the OEC against heat-induced inactivation. This Synechococcus sp. (strain JA-2-3B'a(2-13)) (Cyanobacteria bacterium Yellowstone B-Prime) protein is Photosystem II extrinsic protein U.